Here is a 1164-residue protein sequence, read N- to C-terminus: DNA-directed RNA polymerase 132 kDa polypeptide (1164 aa).

This sequence belongs to the RNA polymerase beta chain family. As to quaternary structure, the DNA-dependent RNA polymerase used for intermediate and late genes expression consists of eight subunits (147) kDa, (133) kDa, (35) kDa, (30) kDa, (22) kDa, (19) kDa, (18) kDa and (7) kDa totalling more than 500 kDa in mass. The same holoenzyme, with the addition of the transcription-specificity factor RAP94, is used for early gene expression.

Its subcellular location is the virion. It catalyses the reaction RNA(n) + a ribonucleoside 5'-triphosphate = RNA(n+1) + diphosphate. Its function is as follows. Part of the DNA-dependent RNA polymerase which catalyzes the transcription of viral DNA into RNA using the four ribonucleoside triphosphates as substrates. Responsible for the transcription of early, intermediate and late genes. DNA-dependent RNA polymerase associates with the early transcription factor (ETF), itself composed of D6 and A7, thereby allowing the early genes transcription. Late transcription, and probably also intermediate transcription, require newly synthesized RNA polymerase. In Camelus, this protein is DNA-directed RNA polymerase 132 kDa polypeptide (RPO132).